Here is a 39-residue protein sequence, read N- to C-terminus: Cytochrome b559 subunit beta (39 aa).

Residues 14–30 (WLAIHGLAVPTVFSLGS) form a helical membrane-spanning segment. Position 18 (histidine 18) interacts with heme.

This sequence belongs to the PsbE/PsbF family. In terms of assembly, heterodimer of an alpha subunit and a beta subunit. PSII is composed of 1 copy each of membrane proteins PsbA, PsbB, PsbC, PsbD, PsbE, PsbF, PsbH, PsbI, PsbJ, PsbK, PsbL, PsbM, PsbT, PsbX, PsbY, PsbZ, Psb30/Ycf12, at least 3 peripheral proteins of the oxygen-evolving complex and a large number of cofactors. It forms dimeric complexes. Heme b serves as cofactor.

The protein resides in the plastid. The protein localises to the chloroplast thylakoid membrane. Functionally, this b-type cytochrome is tightly associated with the reaction center of photosystem II (PSII). PSII is a light-driven water:plastoquinone oxidoreductase that uses light energy to abstract electrons from H(2)O, generating O(2) and a proton gradient subsequently used for ATP formation. It consists of a core antenna complex that captures photons, and an electron transfer chain that converts photonic excitation into a charge separation. In Huperzia lucidula (Shining clubmoss), this protein is Cytochrome b559 subunit beta.